The chain runs to 279 residues: Thioredoxin-like 1-1, chloroplastic (279 aa).

In terms of domain architecture, Thioredoxin spans 56–202 (ALTERKARPL…FKDALAKHGP (147 aa)). Active-site nucleophile residues include cysteine 125 and cysteine 128. Cysteine 125 and cysteine 128 form a disulfide bridge.

It belongs to the thioredoxin family.

Its function is as follows. Probable thiol-disulfide oxidoreductase that may participate in various redox reactions. This is Thioredoxin-like 1-1, chloroplastic from Oryza sativa subsp. japonica (Rice).